Here is a 101-residue protein sequence, read N- to C-terminus: Small ribosomal subunit protein uS14 (101 aa).

It belongs to the universal ribosomal protein uS14 family. As to quaternary structure, part of the 30S ribosomal subunit. Contacts proteins S3 and S10.

Its function is as follows. Binds 16S rRNA, required for the assembly of 30S particles and may also be responsible for determining the conformation of the 16S rRNA at the A site. The protein is Small ribosomal subunit protein uS14 of Brucella abortus (strain 2308).